The primary structure comprises 67 residues: DNA-directed RNA polymerase subunit omega (67 aa).

The protein belongs to the RNA polymerase subunit omega family. In terms of assembly, the RNAP catalytic core consists of 2 alpha, 1 beta, 1 beta' and 1 omega subunit. When a sigma factor is associated with the core the holoenzyme is formed, which can initiate transcription.

It catalyses the reaction RNA(n) + a ribonucleoside 5'-triphosphate = RNA(n+1) + diphosphate. Promotes RNA polymerase assembly. Latches the N- and C-terminal regions of the beta' subunit thereby facilitating its interaction with the beta and alpha subunits. In Listeria innocua serovar 6a (strain ATCC BAA-680 / CLIP 11262), this protein is DNA-directed RNA polymerase subunit omega.